We begin with the raw amino-acid sequence, 110 residues long: NADH-quinone oxidoreductase subunit K (110 aa).

3 consecutive transmembrane segments (helical) span residues 13-33, 41-61, and 73-93; these read LNHY…GLFM, ILMS…AFSV, and IIIL…LLIY.

Belongs to the complex I subunit 4L family. As to quaternary structure, NDH-1 is composed of 14 different subunits. Subunits NuoA, H, J, K, L, M, N constitute the membrane sector of the complex.

It localises to the cell inner membrane. The enzyme catalyses a quinone + NADH + 5 H(+)(in) = a quinol + NAD(+) + 4 H(+)(out). NDH-1 shuttles electrons from NADH, via FMN and iron-sulfur (Fe-S) centers, to quinones in the respiratory chain. The immediate electron acceptor for the enzyme in this species is believed to be ubiquinone. Couples the redox reaction to proton translocation (for every two electrons transferred, four hydrogen ions are translocated across the cytoplasmic membrane), and thus conserves the redox energy in a proton gradient. This chain is NADH-quinone oxidoreductase subunit K, found in Rickettsia typhi (strain ATCC VR-144 / Wilmington).